The sequence spans 352 residues: NADP-dependent isopropanol dehydrogenase (352 aa).

Zn(2+) contacts are provided by Cys37, His59, and Asp150. NADP(+)-binding positions include Ile175–Val178, Gly198–Arg200, Tyr218, Val265–Tyr267, and Lys340.

It belongs to the zinc-containing alcohol dehydrogenase family. Homotetramer. The cofactor is Zn(2+).

The enzyme catalyses propan-2-ol + NADP(+) = acetone + NADPH + H(+). In terms of biological role, alcohol dehydrogenase with a preference for medium chain secondary alcohols, such as 2-butanol and isopropanol. Has very low activity with primary alcohols, such as ethanol. Under physiological conditions, the enzyme reduces aldehydes and 2-ketones to produce secondary alcohols. Is also active with acetaldehyde and propionaldehyde. This chain is NADP-dependent isopropanol dehydrogenase (adh), found in Thermoanaerobacter brockii (Thermoanaerobium brockii).